Here is a 188-residue protein sequence, read N- to C-terminus: Phosphoribosylglycinamide formyltransferase (188 aa).

Position 12 to 14 (12 to 14 (GSN)) interacts with N(1)-(5-phospho-beta-D-ribosyl)glycinamide. Residues lysine 66, 91 to 94 (MRLI), and asparagine 108 each bind (6R)-10-formyltetrahydrofolate. Histidine 110 (proton donor) is an active-site residue.

Belongs to the GART family.

The enzyme catalyses N(1)-(5-phospho-beta-D-ribosyl)glycinamide + (6R)-10-formyltetrahydrofolate = N(2)-formyl-N(1)-(5-phospho-beta-D-ribosyl)glycinamide + (6S)-5,6,7,8-tetrahydrofolate + H(+). It functions in the pathway purine metabolism; IMP biosynthesis via de novo pathway; N(2)-formyl-N(1)-(5-phospho-D-ribosyl)glycinamide from N(1)-(5-phospho-D-ribosyl)glycinamide (10-formyl THF route): step 1/1. In terms of biological role, catalyzes the transfer of a formyl group from 10-formyltetrahydrofolate to 5-phospho-ribosyl-glycinamide (GAR), producing 5-phospho-ribosyl-N-formylglycinamide (FGAR) and tetrahydrofolate. The polypeptide is Phosphoribosylglycinamide formyltransferase (Staphylococcus aureus (strain Mu50 / ATCC 700699)).